The sequence spans 116 residues: Non-specific lipid-transfer protein 8 (116 aa).

A signal peptide spans 1 to 24 (MNVLKCLAIISVLGIFFIPRYSES). 4 disulfides stabilise this stretch: C28-C76, C38-C53, C54-C98, and C74-C112.

This sequence belongs to the plant LTP family.

Its function is as follows. Plant non-specific lipid-transfer proteins transfer phospholipids as well as galactolipids across membranes. May play a role in wax or cutin deposition in the cell walls of expanding epidermal cells and certain secretory tissues. This is Non-specific lipid-transfer protein 8 (LTP8) from Arabidopsis thaliana (Mouse-ear cress).